A 556-amino-acid chain; its full sequence is MNVMQENQIKLIEHIKQGVVQAVGLEEAEVPEILLEVPKDKKHGDYSTNIAMQLARVAKKAPRQIAESIVPELKKDNKLIKEVEIAGPGFINFYLDNAYLTDLVPVILTEDKKYGESDFGKGEKFQIEFVSANPTGDLHLGHARGAAIGDSLANIMKMAGFDVSREYYINDAGNQINNLVLSAEARYFEALGLDSEFPEDGYRGADIISLGKDLAAKYGDKYVHTSEEERRSVFRVDALAFETGKLRADLEEFRVSFDEWFSETSLYEENKVLPALERLRENGYIYEQDGATWLRTTDFEDDKDRVLIKSDGSYTYFLPDIAYHLNKLERGFDVLIDIWGADHHGYIPRMRAAIEALGYSPNQLEVEIIQLVHLFEDGVQVKMSKRTGKSVTMRDLIEEVGLDATRYFFAMRSSDTHMNFDMSLAKSTSNDNPVYYVQYAHARISSILRSGKEQGLEVTKDADMSLLQTEAEYDLLKVLGEFADVVAEAATKRAPHRIVRYLNDLASSFHRFYNSNKVLDMDNLEVTKARLALIKTAQITLRNGLTLLGVSAPEKM.

The short motif at 132–142 (ANPTGDLHLGH) is the 'HIGH' region element.

This sequence belongs to the class-I aminoacyl-tRNA synthetase family. As to quaternary structure, monomer.

Its subcellular location is the cytoplasm. The enzyme catalyses tRNA(Arg) + L-arginine + ATP = L-arginyl-tRNA(Arg) + AMP + diphosphate. In Listeria monocytogenes serotype 4b (strain CLIP80459), this protein is Arginine--tRNA ligase.